A 184-amino-acid polypeptide reads, in one-letter code: MKLIVGLGNPGEKYAKTKHNVGYWVLDLLAEKLALSFDQKTENGIYVKQPDFILAKPTTFMNKSGDFVEELIKFYKINTQDLMIIYDDMNFEVGQAAIKTTGSAGGQRGMAHIIEKCKTKEIKRLKIGISRGKNAKEYVLSPFLPKDNAKIKLVIEEAANILIFYLSNSFITTIEKFNANKNKV.

Y14 serves as a coordination point for tRNA. H19 serves as the catalytic Proton acceptor. TRNA contacts are provided by F60 and N62.

The protein belongs to the PTH family. Monomer.

It localises to the cytoplasm. It catalyses the reaction an N-acyl-L-alpha-aminoacyl-tRNA + H2O = an N-acyl-L-amino acid + a tRNA + H(+). Its function is as follows. Hydrolyzes ribosome-free peptidyl-tRNAs (with 1 or more amino acids incorporated), which drop off the ribosome during protein synthesis, or as a result of ribosome stalling. In terms of biological role, catalyzes the release of premature peptidyl moieties from peptidyl-tRNA molecules trapped in stalled 50S ribosomal subunits, and thus maintains levels of free tRNAs and 50S ribosomes. This Mesomycoplasma hyopneumoniae (strain 7448) (Mycoplasma hyopneumoniae) protein is Peptidyl-tRNA hydrolase.